Here is a 495-residue protein sequence, read N- to C-terminus: Aspartyl/glutamyl-tRNA(Asn/Gln) amidotransferase subunit B (495 aa).

The protein belongs to the GatB/GatE family. GatB subfamily. As to quaternary structure, heterotrimer of A, B and C subunits.

It catalyses the reaction L-glutamyl-tRNA(Gln) + L-glutamine + ATP + H2O = L-glutaminyl-tRNA(Gln) + L-glutamate + ADP + phosphate + H(+). The enzyme catalyses L-aspartyl-tRNA(Asn) + L-glutamine + ATP + H2O = L-asparaginyl-tRNA(Asn) + L-glutamate + ADP + phosphate + 2 H(+). Functionally, allows the formation of correctly charged Asn-tRNA(Asn) or Gln-tRNA(Gln) through the transamidation of misacylated Asp-tRNA(Asn) or Glu-tRNA(Gln) in organisms which lack either or both of asparaginyl-tRNA or glutaminyl-tRNA synthetases. The reaction takes place in the presence of glutamine and ATP through an activated phospho-Asp-tRNA(Asn) or phospho-Glu-tRNA(Gln). The polypeptide is Aspartyl/glutamyl-tRNA(Asn/Gln) amidotransferase subunit B (Beijerinckia indica subsp. indica (strain ATCC 9039 / DSM 1715 / NCIMB 8712)).